Reading from the N-terminus, the 72-residue chain is Large ribosomal subunit protein bL31 (72 aa).

Belongs to the bacterial ribosomal protein bL31 family. Type A subfamily. As to quaternary structure, part of the 50S ribosomal subunit.

Functionally, binds the 23S rRNA. This is Large ribosomal subunit protein bL31 from Prosthecochloris aestuarii (strain DSM 271 / SK 413).